We begin with the raw amino-acid sequence, 216 residues long: Peptide methionine sulfoxide reductase MsrA (216 aa).

Cysteine 54 is a catalytic residue.

It belongs to the MsrA Met sulfoxide reductase family.

The catalysed reaction is L-methionyl-[protein] + [thioredoxin]-disulfide + H2O = L-methionyl-(S)-S-oxide-[protein] + [thioredoxin]-dithiol. It catalyses the reaction [thioredoxin]-disulfide + L-methionine + H2O = L-methionine (S)-S-oxide + [thioredoxin]-dithiol. Functionally, has an important function as a repair enzyme for proteins that have been inactivated by oxidation. Catalyzes the reversible oxidation-reduction of methionine sulfoxide in proteins to methionine. In Xanthomonas campestris pv. campestris (strain 8004), this protein is Peptide methionine sulfoxide reductase MsrA.